We begin with the raw amino-acid sequence, 97 residues long: YcgL domain-containing protein PMI1171 (97 aa).

The region spanning 3–87 is the YcgL domain; that stretch reads MICAIYRSTK…PVESMLNAYL (85 aa).

The polypeptide is YcgL domain-containing protein PMI1171 (Proteus mirabilis (strain HI4320)).